The following is a 426-amino-acid chain: MLGRNFPYFNSVGGFYSRENSRRQPGTGYTSKVRVRDKYHIVGFISSGTYGRVYKAVGRNGQGGEFAIKKFKPDKEGDIIQYTGLSQSAIREMALCSELDHANVVQLAEIILEDKCIFMVFEYTEHDLLQIIHHHTQPQRHPIPAAMVRSILFQLLNGLLYLHTNWVLHRDLKPANILVTSSGAIRIGDLGLARLFYKPLNSLFSGDKVVVTIWYRAPELLMGSRHYTPAVDLWAVGCIFAELLSLRPIFKGEEAKMDSKKTVPFQRNQMMKIIDIMGLPHRDNWPGIVHMPEYSQLQSLAMSRAPNHISRTSNLGSWYQNCLKNGGYSVNSSVGTPGDDGFDLLSRLLDYDPTSRITAKEALEHPYFKNGGPISANCFEGFEGKYPHRRITHDDNDIRSGSLPGTKRSGLPDDSLMSRAAKRMKE.

The 330-residue stretch at 39–368 (YHIVGFISSG…AKEALEHPYF (330 aa)) folds into the Protein kinase domain. ATP-binding positions include 45-53 (ISSGTYGRV) and K69. The Proton acceptor role is filled by D171. Positions 389–398 (RRITHDDNDI) are enriched in basic and acidic residues. Positions 389–426 (RRITHDDNDIRSGSLPGTKRSGLPDDSLMSRAAKRMKE) are disordered.

It belongs to the protein kinase superfamily. CMGC Ser/Thr protein kinase family. CDC2/CDKX subfamily. Component of the srb8-11 complex, a regulatory module of the Mediator complex. Requires Mg(2+) as cofactor.

It is found in the nucleus. The enzyme catalyses L-seryl-[protein] + ATP = O-phospho-L-seryl-[protein] + ADP + H(+). The catalysed reaction is L-threonyl-[protein] + ATP = O-phospho-L-threonyl-[protein] + ADP + H(+). It carries out the reaction [DNA-directed RNA polymerase] + ATP = phospho-[DNA-directed RNA polymerase] + ADP + H(+). Component of the srb8-11 complex. The srb8-11 complex is a regulatory module of the Mediator complex which is itself involved in regulation of basal and activated RNA polymerase II-dependent transcription. The srb8-11 complex may be involved in the transcriptional repression of a subset of genes regulated by Mediator. It may inhibit the association of the Mediator complex with RNA polymerase II to form the holoenzyme complex. The srb8-11 complex phosphorylates the C-terminal domain (CTD) of the largest subunit of RNA polymerase II. The chain is Serine/threonine-protein kinase ssn3 (ssn3) from Emericella nidulans (strain FGSC A4 / ATCC 38163 / CBS 112.46 / NRRL 194 / M139) (Aspergillus nidulans).